A 248-amino-acid chain; its full sequence is 14-3-3 protein (248 aa).

2 coiled-coil regions span residues Met-13–Ile-33 and Arg-91–Glu-111. Residue Arg-135–Tyr-136 coordinates O-phospho-L-serine. Thr-214 is modified (phosphothreonine). Positions Thr-237–Lys-248 match the Putative polyglycylation target motif (T/G)X0-1(D/E)X1-3-G(D/E)X1-2(gE)2-4, where X is polar or negatively charged amino acid, and gE is polyglycylated glutamine motif. Glu-246 carries the post-translational modification 5-glutamyl polyglycine.

This sequence belongs to the 14-3-3 family. In terms of assembly, homodimer. Homodimerizes via N-terminal domains. Oligomerizes forming homotrimers, homotetramers and protein filaments. Oligomerization is hindered by polyglycylation in vivo. Interacts with a large number of both cytosolic and membrane proteins in trophozoites and encysting parasites. Interacts with a serine/threonine protein kinase GL50803_112076 (gCDC7). Component of a multiprotein complex containing gCDC7 and GL50803_94117 (gDBF4), a regulatory subunit of gCDC7, during both the trophozoite and encysting stages of the parasite. Interacts with fructose-bisphosphate aldolase GL50803_11043 (gFBA), pyruvate kinase GL50803_17143 (gPyk), acetyl-CoA synthetase GL50803_13608 (gACS), protein kinase GL50803_22165 (gSTE), DEAD box RNA helicase GL50803_34684 (gVASA) and Golgi/cell cycle associated protein GL50803_17472 (gGCCA). Interacts with actin. Interacts with both monomeric phosphorylated and unphosphorylated actin. The interaction is enhanced by phosphorylation of actin and inhibited by Rho GTPase Rac. In terms of processing, phosphorylated constitutively throughout the life cycle. Phosphorylation is very high in trophozoites and encysting cells of 12 hours. Phosphorylated during excystation. Phosphorylation promotes its binding to various target proteins and is critical for encystation process. Phosphorylation modification is not influenced by polyglycylation modification. Post-translationally, polyglycylated on a glutamate residue, resulting in polyglycine chain on the gamma-carboxyl group. Polyglycylated by the tubulin--tyrosine ligase-like protein GL50803_8456 (gTTLL3). The polyglycine chain is shortened by metallopeptidases of the M20 family, namely dipeptidases GL50803_15832 (gDIP1) and GL50803_8407 (gDIP2). The length of the polyglycine chain is developmental stage-dependent. In trophozoites, glycine residues range from 10 to 31, with the greatest occurrence of 21 residues. In 12 hour encystation stage, glycine residues range from 6 to 22, with the greatest occurrence of 10 residues. The differential rate of polyglycylation/deglycylation during the encystation process regulates the intracellular localization of this protein. Relocalizes partially from the cytoplasm inside the nuclei following the shortening of the polyglycine chain in encysting cells. Polyglycylation modification is not influenced by phosphorylation modification. Polyglycylation prevents oligomerization in vivo.

Its subcellular location is the cytoplasm. The protein resides in the cytoskeleton. It localises to the nucleus. It is found in the cell projection. The protein localises to the cilium. Its subcellular location is the flagellum. The protein resides in the spindle. It localises to the nucleus envelope. It is found in the endoplasmic reticulum. Functionally, adapter protein implicated in the regulation of a large spectrum of both general and specialized signaling pathways. Binds to a large number of partners, usually by recognition of a phosphoserine or phosphothreonine motif. Binding generally results in the modulation of the activity of the binding partner. Binds with varying affinity to various synthetic phosphopeptides having a consensus binding motif RSX(pS/pT)XP, called mode-1, where X is any residue and pS/pT is a phosphorylated serine/threonine, and to synthetic phosphopeptides having a consensus binding motif Xp(S/T)X1-2-COOH, called mode-3, in which the phosphorylated residue occupies the penultimate C-terminal position in the target protein, but does not bind to their unphosphorylated counterparts. Binds to synthetic human RAF1 phosphopeptides, but not to their unphosphorylated forms. Binds to difopein, a polypeptide containing a phosphorylation-independent binding motif. Involved in encystation. Involved in cell proliferation. Required for actin and tubulin cytoskeletal organization. Regulates actin filament formation and nuclear size. The protein is 14-3-3 protein of Giardia intestinalis (strain ATCC 50803 / WB clone C6) (Giardia lamblia).